Here is a 622-residue protein sequence, read N- to C-terminus: Meiotic expression up-regulated protein 25 (622 aa).

The protein is Meiotic expression up-regulated protein 25 (meu25) of Schizosaccharomyces pombe (strain 972 / ATCC 24843) (Fission yeast).